Here is a 158-residue protein sequence, read N- to C-terminus: Transcription elongation factor GreA (158 aa).

A coiled-coil region spans residues 8 to 74; it reads TKGGYNKLKD…TLERVLSTAT (67 aa).

It belongs to the GreA/GreB family.

Its function is as follows. Necessary for efficient RNA polymerase transcription elongation past template-encoded arresting sites. The arresting sites in DNA have the property of trapping a certain fraction of elongating RNA polymerases that pass through, resulting in locked ternary complexes. Cleavage of the nascent transcript by cleavage factors such as GreA or GreB allows the resumption of elongation from the new 3'terminus. GreA releases sequences of 2 to 3 nucleotides. The sequence is that of Transcription elongation factor GreA from Chloroherpeton thalassium (strain ATCC 35110 / GB-78).